The chain runs to 226 residues: Large ribosomal subunit protein mL67 (226 aa).

Belongs to the mitochondrion-specific ribosomal protein mL67 family. Component of the mitochondrial large ribosomal subunit (mt-LSU). Mature yeast 74S mitochondrial ribosomes consist of a small (37S) and a large (54S) subunit. The 37S small subunit contains a 15S ribosomal RNA (15S mt-rRNA) and 34 different proteins. The 54S large subunit contains a 21S rRNA (21S mt-rRNA) and 46 different proteins.

The protein localises to the nucleus. It localises to the mitochondrion. Component of the mitochondrial ribosome (mitoribosome), a dedicated translation machinery responsible for the synthesis of mitochondrial genome-encoded proteins, including at least some of the essential transmembrane subunits of the mitochondrial respiratory chain. The mitoribosomes are attached to the mitochondrial inner membrane and translation products are cotranslationally integrated into the membrane. mL67/MHR1 also has extraribosomal functions, being involved in regulation of mitochondrial DNA recombination, maintenance and repair, and generation of homoplasmic cells. mL67/MHR1 also acts as transcription factor involved in regulation of RNA polymerase II-dependent transcription. The chain is Large ribosomal subunit protein mL67 (MHR1) from Saccharomyces cerevisiae (strain ATCC 204508 / S288c) (Baker's yeast).